The sequence spans 234 residues: Triosephosphate isomerase (234 aa).

Position 8 to 10 (8 to 10 (NFK)) interacts with substrate. His90 functions as the Electrophile in the catalytic mechanism. Catalysis depends on Glu159, which acts as the Proton acceptor. Residues Gly165 and Ser197 each contribute to the substrate site.

Belongs to the triosephosphate isomerase family. In terms of assembly, homodimer.

The protein localises to the cytoplasm. The enzyme catalyses D-glyceraldehyde 3-phosphate = dihydroxyacetone phosphate. It participates in carbohydrate biosynthesis; gluconeogenesis. It functions in the pathway carbohydrate degradation; glycolysis; D-glyceraldehyde 3-phosphate from glycerone phosphate: step 1/1. In terms of biological role, involved in the gluconeogenesis. Catalyzes stereospecifically the conversion of dihydroxyacetone phosphate (DHAP) to D-glyceraldehyde-3-phosphate (G3P). This chain is Triosephosphate isomerase, found in Helicobacter pylori (strain P12).